Consider the following 175-residue polypeptide: Ribosome maturation factor RimM (175 aa).

A PRC barrel domain is found at 96–175 (EEDYYWHDLI…TITVDWDAGF (80 aa)).

The protein belongs to the RimM family. In terms of assembly, binds ribosomal protein uS19.

The protein resides in the cytoplasm. An accessory protein needed during the final step in the assembly of 30S ribosomal subunit, possibly for assembly of the head region. Essential for efficient processing of 16S rRNA. May be needed both before and after RbfA during the maturation of 16S rRNA. It has affinity for free ribosomal 30S subunits but not for 70S ribosomes. The polypeptide is Ribosome maturation factor RimM (Haemophilus ducreyi (strain 35000HP / ATCC 700724)).